Consider the following 318-residue polypeptide: D-alanine--D-alanine ligase B (318 aa).

Positions 116 to 311 (KQVWQSLGIP…FQQLVLAILA (196 aa)) constitute an ATP-grasp domain. An ATP-binding site is contributed by 142-197 (STELGFPLIVKPAHEGSSIGMAKVNSTQELVAAWQDAAKYDSQVLVEQWIHGPEFT). Positions 265, 278, and 280 each coordinate Mg(2+).

Belongs to the D-alanine--D-alanine ligase family. The cofactor is Mg(2+). Mn(2+) serves as cofactor.

It localises to the cytoplasm. The catalysed reaction is 2 D-alanine + ATP = D-alanyl-D-alanine + ADP + phosphate + H(+). Its pathway is cell wall biogenesis; peptidoglycan biosynthesis. In terms of biological role, cell wall formation. The protein is D-alanine--D-alanine ligase B of Pseudomonas putida (strain ATCC 47054 / DSM 6125 / CFBP 8728 / NCIMB 11950 / KT2440).